A 138-amino-acid polypeptide reads, in one-letter code: Putative pre-16S rRNA nuclease (138 aa).

It belongs to the YqgF nuclease family.

Its subcellular location is the cytoplasm. Could be a nuclease involved in processing of the 5'-end of pre-16S rRNA. In Cronobacter sakazakii (strain ATCC BAA-894) (Enterobacter sakazakii), this protein is Putative pre-16S rRNA nuclease.